Consider the following 786-residue polypeptide: MSFSRALLWARLPAGRQAGHRAAICSALRPHFGPFPGVLGQVSVLATASSSASGGSKIPNTSLFVPLTVKPQGPSADGDVGAELTRPLDKNEVKKVLDKFYKRKEIQKLGADYGLDARLFHQAFISFRNYIMQSHSLDVDIHIVLNDICFGAAHADDLFPFFLRHAKQIFPVLDCKDDLRKISDLRIPPNWYPDARAMQRKIIFHSGPTNSGKTYHAIQKYFSAKSGVYCGPLKLLAHEIFEKSNAAGVPCDLVTGEERVTVQPNGKQASHVSCTVEMCSVTTPYEVAVIDEIQMIRDPARGWAWTRALLGLCAEEVHLCGEPAAIDLVMELMYTTGEEVEVRDYKRLTPISVLDHALESLDNLRPGDCIVCFSKNDIYSVSRQIEIRGLESAVIYGSLPPGTKLAQAKKFNDPNDPCKILVATDAIGMGLNLSIRRIIFYSLIKPSINEKGERELEPITTSQALQIAGRAGRFSSRFKEGEVTTMNHEDLSLLKEILKRPVDPIRAAGLHPTAEQIEMFAYHLPDATLSNLIDIFVDFSQVDGQYFVCNMDDFKFSAELIQHIPLSLRVRYVFCTAPINKKQPFVCSSLLQFARQYSRNEPLTFAWLRRYIKWPLLPPKNIKDLMDLEAVHDVLDLYLWLSYRFMDMFPDASLIRDLQKELDGIIQDGVHNITKLIKMSETHKLLNLEGFPSGSQSRLSGTLKSQARRTRGTKALGSKATEPPSPDAGELSLASRLVQQGLLTPDMLKQLEKEWMTQQTEHNKEKTESGTHPKGTRRKKKEPDSD.

The transit peptide at 1–22 (MSFSRALLWARLPAGRQAGHRA) directs the protein to the mitochondrion. K99 is subject to N6-acetyllysine. The region spanning 194–334 (DARAMQRKII…AIDLVMELMY (141 aa)) is the Helicase ATP-binding domain. 207–214 (GPTNSGKT) provides a ligand contact to ATP. K220 is subject to N6-acetyllysine. The Helicase C-terminal domain occupies 353-518 (VLDHALESLD…GLHPTAEQIE (166 aa)). Residues 650 to 786 (PDASLIRDLQ…RRKKKEPDSD (137 aa)) are interaction with LAMTOR5, important for protein stability. Disordered regions lie at residues 690 to 730 (GFPS…DAGE) and 749 to 786 (KQLE…PDSD). The span at 693 to 705 (SGSQSRLSGTLKS) shows a compositional bias: polar residues. Phosphoserine is present on S725. Basic and acidic residues predominate over residues 749–771 (KQLEKEWMTQQTEHNKEKTESGT).

It belongs to the helicase family. In terms of assembly, homodimer; in free form. Component of the mitochondrial degradosome (mtEXO) complex which is a heteropentamer containing 2 copies of SUPV3L1 and 3 copies of PNPT1. As part of mitochondrial degradosome complex, interacts with GRSF1 in a RNA-dependent manner; the interaction enhances the activity of the complex. Interacts with LAMTOR5/HBXIP, WRN and BLM. Requires Mg(2+) as cofactor. Mn(2+) serves as cofactor. Broadly expressed.

The protein localises to the nucleus. It localises to the mitochondrion matrix. The protein resides in the mitochondrion nucleoid. The catalysed reaction is ATP + H2O = ADP + phosphate + H(+). Its activity is regulated as follows. Helicase activity toward DNA substrate is inhibited by micromolar concentrations of 5,6-dichloro-1-(beta-D-ribofuranosyl)benzotriazole (DRBT) and 4,5,6,7-tetrabromobenzotriazole (TBBT). Helicase activity toward RNA substrate is inhibited by elevated concentrations of TBBT. Inhibited by some ring-expanded nucleoside analogs. Major helicase player in mitochondrial RNA metabolism. Component of the mitochondrial degradosome (mtEXO) complex, that degrades 3' overhang double-stranded RNA with a 3'-to-5' directionality in an ATP-dependent manner. Involved in the degradation of non-coding mitochondrial transcripts (MT-ncRNA) and tRNA-like molecules. ATPase and ATP-dependent multisubstrate helicase, able to unwind double-stranded (ds) DNA and RNA, and RNA/DNA heteroduplexes in the 5'-to-3' direction. Plays a role in the RNA surveillance system in mitochondria; regulates the stability of mature mRNAs, the removal of aberrantly formed mRNAs and the rapid degradation of non coding processing intermediates. Also implicated in recombination and chromatin maintenance pathways. May protect cells from apoptosis. Associates with mitochondrial DNA. This Homo sapiens (Human) protein is ATP-dependent RNA helicase SUPV3L1, mitochondrial (SUPV3L1).